The following is a 59-amino-acid chain: uncharacterized protein (59 aa).

An N-terminal signal peptide occupies residues 1 to 17 (MIASIWYAELGCASAIA).

This is an uncharacterized protein from Rickettsia prowazekii (strain Madrid E).